The sequence spans 309 residues: Taste receptor type 2 member 20 (309 aa).

The Extracellular portion of the chain corresponds to 1–6 (MMSFLH). Residues 7-27 (IVFSILVVVAFILGNFANGFI) form a helical membrane-spanning segment. Topologically, residues 28–46 (ALINFIAWVKRQKISSADQ) are cytoplasmic. The chain crosses the membrane as a helical span at residues 47–67 (IIAALAVSRVGLLWVILLHWY). The Extracellular segment spans residues 68 to 79 (STVLNPTSSNLK). The chain crosses the membrane as a helical span at residues 80–100 (VTIFISNAWAVTNHFSIWLAA). Topologically, residues 101-125 (SLSIFYLLKIVNFSRLIFHHLKRKA) are cytoplasmic. The helical transmembrane segment at 126–146 (KSVVLVIVLGSLFFLVCHLVM) threads the bilayer. Topologically, residues 147–178 (KSTYINVWTEEYEGNVTWKIKLRNAMHLSNLT) are extracellular. Asn-161 and Asn-176 each carry an N-linked (GlcNAc...) asparagine glycan. The helical transmembrane segment at 179–199 (VAMLANLIPFTLTLISFLLLI) threads the bilayer. At 200-229 (YSLCKHLKKMQLHGKGSQDPSTKIHIKALQ) the chain is on the cytoplasmic side. Residues 230–250 (TVTSFLILLAIYFLCLITSFW) traverse the membrane as a helical segment. Topologically, residues 251 to 259 (NSKMRPKEI) are extracellular. Residues 260–280 (VLMLCQAFGIIYPSFHSFILI) form a helical membrane-spanning segment. Residues 281-309 (WGNKTLKQTFLSVLWRVTCWAKGQNQSTP) are Cytoplasmic-facing.

The protein belongs to the G-protein coupled receptor T2R family.

It localises to the membrane. Its function is as follows. Receptor that may play a role in the perception of bitterness and is gustducin-linked. May play a role in sensing the chemical composition of the gastrointestinal content. The activity of this receptor may stimulate alpha gustducin, mediate PLC-beta-2 activation and lead to the gating of TRPM5. This is Taste receptor type 2 member 20 (TAS2R20) from Gorilla gorilla gorilla (Western lowland gorilla).